The following is a 73-amino-acid chain: Protein kish (73 aa).

An N-terminal signal peptide occupies residues 1 to 21; sequence MTAIFNFESLLFVILLTICTC. Residues 22–52 lie on the Lumenal side of the membrane; the sequence is TYLHRQFPALLEKRKEGVTMVFWKCARIGER. A helical membrane pass occupies residues 53–73; it reads ASPYISLFCVFMALRFIFGSS.

It belongs to the KISH family.

The protein localises to the golgi apparatus membrane. It is found in the endoplasmic reticulum membrane. In terms of biological role, involved in the early part of the secretory pathway. The sequence is that of Protein kish (ksh1) from Schizosaccharomyces pombe (strain 972 / ATCC 24843) (Fission yeast).